A 281-amino-acid polypeptide reads, in one-letter code: Endochitinase B (281 aa).

A signal peptide spans 1–33; it reads MAMAKAGAPRVSAAQLVTLGLSLLCAVAGPAAA. Residues 34 to 68 enclose the Chitin-binding type-1 domain; sequence QNCGCQPNVCCSKFGYCGTTDEYCGDGCQSGPCRS. 4 disulfide bridges follow: Cys-36-Cys-44, Cys-38-Cys-50, Cys-43-Cys-57, and Cys-61-Cys-66. Residues 69–78 form a hinge region (Gly-rich) region; the sequence is GGGGSSGGGG. Residues 79–281 are catalytic; that stretch reads ANVASVVTGS…GVDPGPNLTC (203 aa). A disulfide bridge connects residues Cys-101 and Cys-150. The active-site Proton donor is the Glu-145. Asn-156 carries N-linked (GlcNAc...) asparagine glycosylation. Cystine bridges form between Cys-162/Cys-171 and Cys-249/Cys-281. A glycan (N-linked (GlcNAc...) asparagine) is linked at Asn-278.

It belongs to the glycosyl hydrolase 19 family. Chitinase class I subfamily.

Its subcellular location is the secreted. It catalyses the reaction Random endo-hydrolysis of N-acetyl-beta-D-glucosaminide (1-&gt;4)-beta-linkages in chitin and chitodextrins.. In terms of biological role, defense against chitin-containing fungal pathogens. Its action is countered by fungal polyglycine hydrolases, that cleaves within its hinge region (Gly-rich) to disrupt chitin-binding. In Zea mays (Maize), this protein is Endochitinase B.